The chain runs to 249 residues: BPI fold-containing family A member 1 (249 aa).

The N-terminal stretch at 1–15 is a signal peptide; the sequence is MFQVAGLIVFCGLLA. Positions 81-86 are important for surfactant activity and antibacterial properties; sequence LLGGLL. An N-linked (GlcNAc...) asparagine glycan is attached at N151. C173 and C217 are oxidised to a cystine.

This sequence belongs to the BPI/LBP/Plunc superfamily. Plunc family. Monomer. Interacts (via N-terminus) with SCNN1B, a subunit of the heterotrimeric epithelial sodium channel (ENaC); this inhibits proteolytic activation of ENaC. Expressed in lung and trachea.

It localises to the secreted. Lipid-binding protein which shows high specificity for the surfactant phospholipid dipalmitoylphosphatidylcholine (DPPC). Plays a role in the innate immune responses of the upper airways. Reduces the surface tension in secretions from airway epithelia and inhibits the formation of biofilm by pathogenic Gram-negative bacteria, such as P.aeruginosa and K.pneumoniae. Negatively regulates proteolytic cleavage of SCNN1G, an event that is required for activation of the epithelial sodium channel (ENaC), and thereby contributes to airway surface liquid homeostasis and proper clearance of mucus. Plays a role in the airway inflammatory response after exposure to irritants. May attract macrophages and neutrophils. In Sus scrofa (Pig), this protein is BPI fold-containing family A member 1 (BPIFA1).